The chain runs to 152 residues: Globin-1 subunit beta (152 aa).

An N-acetylserine modification is found at S2. Residues 12–152 (VSNADQKDLL…SLVAVVQAAL (141 aa)) enclose the Globin domain. Heme b-binding residues include H72 and H104.

The protein belongs to the globin family. Heterotetramer of two alpha chains and two beta chains.

In Anadara trapezia (Sydney cockle), this protein is Globin-1 subunit beta.